A 351-amino-acid chain; its full sequence is Holliday junction branch migration complex subunit RuvB (351 aa).

A large ATPase domain (RuvB-L) region spans residues 1-189; sequence MTAHDADWSD…FGFTAHMDFY (189 aa). ATP contacts are provided by residues L28, R29, G70, K73, T74, S75, 136 to 138, R179, Y189, and R226; that span reads EDF. T74 contributes to the Mg(2+) binding site. The segment at 190–260 is small ATPAse domain (RuvB-S); the sequence is EPAELQQVLA…VAKAALAVYD (71 aa). The segment at 263-351 is head domain (RuvB-H); that stretch reads ELGLDRLDRA…AGLGQPGLFD (89 aa). Residues R318 and R323 each contribute to the DNA site.

The protein belongs to the RuvB family. In terms of assembly, homohexamer. Forms an RuvA(8)-RuvB(12)-Holliday junction (HJ) complex. HJ DNA is sandwiched between 2 RuvA tetramers; dsDNA enters through RuvA and exits via RuvB. An RuvB hexamer assembles on each DNA strand where it exits the tetramer. Each RuvB hexamer is contacted by two RuvA subunits (via domain III) on 2 adjacent RuvB subunits; this complex drives branch migration. In the full resolvosome a probable DNA-RuvA(4)-RuvB(12)-RuvC(2) complex forms which resolves the HJ.

Its subcellular location is the cytoplasm. It catalyses the reaction ATP + H2O = ADP + phosphate + H(+). In terms of biological role, the RuvA-RuvB-RuvC complex processes Holliday junction (HJ) DNA during genetic recombination and DNA repair, while the RuvA-RuvB complex plays an important role in the rescue of blocked DNA replication forks via replication fork reversal (RFR). RuvA specifically binds to HJ cruciform DNA, conferring on it an open structure. The RuvB hexamer acts as an ATP-dependent pump, pulling dsDNA into and through the RuvAB complex. RuvB forms 2 homohexamers on either side of HJ DNA bound by 1 or 2 RuvA tetramers; 4 subunits per hexamer contact DNA at a time. Coordinated motions by a converter formed by DNA-disengaged RuvB subunits stimulates ATP hydrolysis and nucleotide exchange. Immobilization of the converter enables RuvB to convert the ATP-contained energy into a lever motion, pulling 2 nucleotides of DNA out of the RuvA tetramer per ATP hydrolyzed, thus driving DNA branch migration. The RuvB motors rotate together with the DNA substrate, which together with the progressing nucleotide cycle form the mechanistic basis for DNA recombination by continuous HJ branch migration. Branch migration allows RuvC to scan DNA until it finds its consensus sequence, where it cleaves and resolves cruciform DNA. The polypeptide is Holliday junction branch migration complex subunit RuvB (Mycobacterium avium (strain 104)).